Here is a 359-residue protein sequence, read N- to C-terminus: 4-hydroxy-2-oxovalerate aldolase 1 (359 aa).

The region spanning 23–275 (VRVTDTSLRD…KTGIDFFDIA (253 aa)) is the Pyruvate carboxyltransferase domain. 31 to 32 (RD) lines the substrate pocket. A Mn(2+)-binding site is contributed by Asp32. The active-site Proton acceptor is His35. Substrate contacts are provided by Ser185 and His214. Positions 214 and 216 each coordinate Mn(2+). Tyr305 serves as a coordination point for substrate.

Belongs to the 4-hydroxy-2-oxovalerate aldolase family.

It catalyses the reaction (S)-4-hydroxy-2-oxopentanoate = acetaldehyde + pyruvate. The chain is 4-hydroxy-2-oxovalerate aldolase 1 from Mycobacteroides abscessus (strain ATCC 19977 / DSM 44196 / CCUG 20993 / CIP 104536 / JCM 13569 / NCTC 13031 / TMC 1543 / L948) (Mycobacterium abscessus).